The primary structure comprises 619 residues: Chaperone protein HscA homolog (619 aa).

Belongs to the heat shock protein 70 family.

Chaperone involved in the maturation of iron-sulfur cluster-containing proteins. Has a low intrinsic ATPase activity which is markedly stimulated by HscB. The protein is Chaperone protein HscA homolog of Shewanella denitrificans (strain OS217 / ATCC BAA-1090 / DSM 15013).